The primary structure comprises 168 residues: Photosystem I assembly protein Ycf3 (168 aa).

TPR repeat units follow at residues 35-68 (AFTYYRDGMSAQSEGNYAEALQNYYEAMRLEMDP), 72-105 (SYILYNIGLIHTSNGEHTKALEYYFRALERNPFL), and 120-153 (GEQAIRQGDSEIAEAWFDQAAEYWKQAIALTPGN).

This sequence belongs to the Ycf3 family.

Its subcellular location is the plastid. It localises to the chloroplast thylakoid membrane. In terms of biological role, essential for the assembly of the photosystem I (PSI) complex. May act as a chaperone-like factor to guide the assembly of the PSI subunits. The protein is Photosystem I assembly protein Ycf3 of Pelargonium hortorum (Common geranium).